Consider the following 415-residue polypeptide: Neuromedin-U receptor 2 (415 aa).

Residues 1-49 lie on the Extracellular side of the membrane; sequence MSGMEKLQNASWIYQQKLEDPFQKHLNSTEEYLAFLCGPRRSHFFLPVS. N-linked (GlcNAc...) asparagine glycans are attached at residues Asn-9 and Asn-27. The chain crosses the membrane as a helical span at residues 50 to 70; it reads VVYVPIFVVGVIGNVLVCLVI. At 71 to 82 the chain is on the cytoplasmic side; sequence LQHQAMKTPTNY. The chain crosses the membrane as a helical span at residues 83-103; the sequence is YLFSLAVSDLLVLLLGMPLEV. Over 104 to 123 the chain is Extracellular; the sequence is YEMWRNYPFLFGPVGCYFKT. A disulfide bridge connects residues Cys-119 and Cys-204. A helical membrane pass occupies residues 124–146; the sequence is ALFETVCFASILSITTVSVERYV. Residues 147–165 are Cytoplasmic-facing; the sequence is AILHPFRAKLQSTRRRALR. The chain crosses the membrane as a helical span at residues 166 to 186; sequence ILGIVWGFSVLFSLPNTSIHG. Over 187–214 the chain is Extracellular; it reads IKFHYFPNGSLVPGSATCTVIKPMWIYN. A glycan (N-linked (GlcNAc...) asparagine) is linked at Asn-194. The helical transmembrane segment at 215 to 235 threads the bilayer; the sequence is FIIQVTSFLFYLLPMTVISVL. Residues 236–265 lie on the Cytoplasmic side of the membrane; the sequence is YYLMALRLKKDKSLEADEGNANIQRPCRKS. The chain crosses the membrane as a helical span at residues 266-286; that stretch reads VNKMLFVLVLVFAICWAPFHI. The Extracellular portion of the chain corresponds to 287–301; the sequence is DRLFFSFVEEWSESL. The helical transmembrane segment at 302–322 threads the bilayer; sequence AAVFNLVHVVSGVFFYLSSAV. Residues 323–415 lie on the Cytoplasmic side of the membrane; that stretch reads NPIIYNLLSR…NYQSFHFNKT (93 aa).

It belongs to the G-protein coupled receptor 1 family. In terms of tissue distribution, predominantly expressed in the CNS, particularly in the medulla oblongata, pontine reticular formation, spinal cord, and thalamus. High level in testis whereas lower levels are present in a variety of peripheral tissues including the gastrointestinal tract, genitourinary tract, liver, pancreas, adrenal gland, thyroid gland, lung, trachea, spleen and thymus.

It is found in the cell membrane. Functionally, receptor for the neuromedin-U and neuromedin-S neuropeptides. This Homo sapiens (Human) protein is Neuromedin-U receptor 2 (NMUR2).